A 524-amino-acid polypeptide reads, in one-letter code: Peptide chain release factor 3 (524 aa).

The tr-type G domain maps to 9-275 (SRRRTFAIIS…AVVDLSPPPI (267 aa)). Residues 18–25 (SHPDAGKT), 86–90 (DTPGH), and 140–143 (NKLD) contribute to the GTP site.

Belongs to the TRAFAC class translation factor GTPase superfamily. Classic translation factor GTPase family. PrfC subfamily.

The protein localises to the cytoplasm. Its function is as follows. Increases the formation of ribosomal termination complexes and stimulates activities of RF-1 and RF-2. It binds guanine nucleotides and has strong preference for UGA stop codons. It may interact directly with the ribosome. The stimulation of RF-1 and RF-2 is significantly reduced by GTP and GDP, but not by GMP. The sequence is that of Peptide chain release factor 3 from Dechloromonas aromatica (strain RCB).